The following is a 197-amino-acid chain: Imidazoleglycerol-phosphate dehydratase (197 aa).

It belongs to the imidazoleglycerol-phosphate dehydratase family.

It is found in the cytoplasm. It carries out the reaction D-erythro-1-(imidazol-4-yl)glycerol 3-phosphate = 3-(imidazol-4-yl)-2-oxopropyl phosphate + H2O. It participates in amino-acid biosynthesis; L-histidine biosynthesis; L-histidine from 5-phospho-alpha-D-ribose 1-diphosphate: step 6/9. The chain is Imidazoleglycerol-phosphate dehydratase from Nitrosococcus oceani (strain ATCC 19707 / BCRC 17464 / JCM 30415 / NCIMB 11848 / C-107).